Here is a 181-residue protein sequence, read N- to C-terminus: Lysozyme B (181 aa).

An N-terminal signal peptide occupies residues 1–19; that stretch reads MRISFFLLILAVIIGYAYG. Residues 139 to 181 constitute a propeptide that is removed on maturation; sequence LTDSRPLGPFNVTEEEKAQLFIDHEIAMAQCEAEKTCNGFDLE.

This sequence belongs to the dictyostelium lysozyme family. Post-translationally, contains six disulfide bonds.

It is found in the cytoplasmic vesicle lumen. The enzyme catalyses Hydrolysis of (1-&gt;4)-beta-linkages between N-acetylmuramic acid and N-acetyl-D-glucosamine residues in a peptidoglycan and between N-acetyl-D-glucosamine residues in chitodextrins.. Its function is as follows. Has antibacterial activity. This chain is Lysozyme B (alyB), found in Dictyostelium discoideum (Social amoeba).